Consider the following 199-residue polypeptide: Chaperone protein TorD (199 aa).

This sequence belongs to the TorD/DmsD family. TorD subfamily.

The protein localises to the cytoplasm. Its function is as follows. Involved in the biogenesis of TorA. Acts on TorA before the insertion of the molybdenum cofactor and, as a result, probably favors a conformation of the apoenzyme that is competent for acquiring the cofactor. The sequence is that of Chaperone protein TorD from Escherichia coli (strain K12 / MC4100 / BW2952).